Reading from the N-terminus, the 366-residue chain is Cobalt-precorrin-5B C(1)-methyltransferase (366 aa).

Belongs to the CbiD family.

It catalyses the reaction Co-precorrin-5B + S-adenosyl-L-methionine = Co-precorrin-6A + S-adenosyl-L-homocysteine. Its pathway is cofactor biosynthesis; adenosylcobalamin biosynthesis; cob(II)yrinate a,c-diamide from sirohydrochlorin (anaerobic route): step 6/10. Its function is as follows. Catalyzes the methylation of C-1 in cobalt-precorrin-5B to form cobalt-precorrin-6A. The sequence is that of Cobalt-precorrin-5B C(1)-methyltransferase from Pseudomonas aeruginosa (strain UCBPP-PA14).